Reading from the N-terminus, the 105-residue chain is Large ribosomal subunit protein uL18c (105 aa).

The protein belongs to the universal ribosomal protein uL18 family. As to quaternary structure, part of the 50S ribosomal subunit; contacts the 5S rRNA.

It is found in the plastid. It localises to the chloroplast. Binds 5S rRNA, forms part of the central protuberance of the 50S subunit. The sequence is that of Large ribosomal subunit protein uL18c (rpl18) from Gracilaria tenuistipitata var. liui (Red alga).